A 1656-amino-acid chain; its full sequence is Probable phospholipid-transporting ATPase DNF3 (1656 aa).

Residues 1–164 lie on the Lumenal side of the membrane; it reads MGIADGQRRR…PRQLYAQFSK (164 aa). Residues 36–74 are disordered; that stretch reads ELEDINESKTFSGSDNNDKDDRDETSGNYAAEEDYEMEE. The span at 51 to 60 shows a compositional bias: basic and acidic residues; sequence NNDKDDRDET. A helical transmembrane segment spans residues 165 to 185; that stretch reads LANTYFFIVAVLQMIPGWSTT. Topologically, residues 186–451 are cytoplasmic; sequence GTYTTIIPLC…RTKAPKLQRK (266 aa). The chain crosses the membrane as a helical span at residues 452 to 472; it reads INMIIVFMVFVVATISLFSYL. The Lumenal portion of the chain corresponds to 473–495; it reads GHVLHKKKYIDQNKAWYLFQADA. Residues 496–516 traverse the membrane as a helical segment; the sequence is GVAPTIMSFIIMYNTVIPLSL. Residues 517-1157 lie on the Cytoplasmic side of the membrane; the sequence is YVTMEIIKVV…ISKMNAVSQE (641 aa). Asp-566 acts as the 4-aspartylphosphate intermediate in catalysis. The ATP site is built by Asp-566, Lys-567, and Thr-568. Residue Asp-566 participates in Mg(2+) binding. Thr-568 is a binding site for Mg(2+). Ser-627 is subject to Phosphoserine. Residues Glu-765, Phe-813, Ser-815, Lys-818, Lys-838, Arg-1034, Thr-1035, Thr-1114, Gly-1115, Asp-1116, 1167 to 1174, Arg-1202, and Lys-1208 each bind ATP; that span reads VVVIDGAT. The helical transmembrane segment at 1158–1178 threads the bilayer; that stretch reads VDSGNIAHCVVVIDGATMAMF. Over 1179–1318 the chain is Lumenal; the sequence is EGNPTYMSVF…MFSGSSLYEP (140 aa). Mg(2+) is bound at residue Asp-1229. ATP contacts are provided by Asn-1232 and Asp-1233. The helical transmembrane segment at 1319–1339 threads the bilayer; the sequence is WSLSMFNTLFTSLPVLCIGMF. At 1340–1365 the chain is on the cytoplasmic side; it reads EKDLKPMTLLTVPELYSYGRLSQGFN. The chain crosses the membrane as a helical span at residues 1366–1386; sequence WLIFMEWVILATTNSLIITFL. At 1387–1395 the chain is on the lumenal side; sequence NVVMWGMSS. Residues 1396 to 1416 traverse the membrane as a helical segment; the sequence is LSDNTMYPLGLINFTAIVALI. Residues 1417–1432 lie on the Cytoplasmic side of the membrane; it reads NVKSQFVEMHNRNWLA. A helical transmembrane segment spans residues 1433–1453; that stretch reads FTSVVLSCGGWLVWCCALPIL. Topologically, residues 1454 to 1473 are lumenal; it reads NNTDQIYDVAYGFYNHFGKD. The chain crosses the membrane as a helical span at residues 1474 to 1494; sequence ITFWCTSLVLALLPITLDIVY. Topologically, residues 1495–1656 are cytoplasmic; it reads KTFKVMIWPS…IIQARLKDLE (162 aa). A disordered region spans residues 1554 to 1576; the sequence is PRTNSRASAKTHNSSIYSMSNGN.

This sequence belongs to the cation transport ATPase (P-type) (TC 3.A.3) family. Type IV subfamily. As to quaternary structure, component of a flippase complex consisting of DNF3 and YNR048W/CRF1. Interacts with YNR048W/CRF1; the interaction is direct and required for proper expression and endoplasmic reticulum (ER) export of either partner. The cofactor is Mg(2+).

The protein resides in the golgi apparatus. It is found in the trans-Golgi network membrane. The protein localises to the endosome membrane. It catalyses the reaction ATP + H2O + phospholipidSide 1 = ADP + phosphate + phospholipidSide 2.. The catalysed reaction is a 1,2-diacyl-sn-glycero-3-phosphocholine(out) + ATP + H2O = a 1,2-diacyl-sn-glycero-3-phosphocholine(in) + ADP + phosphate + H(+). It carries out the reaction a 1,2-diacyl-sn-glycero-3-phosphoethanolamine(out) + ATP + H2O = a 1,2-diacyl-sn-glycero-3-phosphoethanolamine(in) + ADP + phosphate + H(+). Catalytic component of a P4-ATPase flippase complex which catalyzes the hydrolysis of ATP coupled to the transport of phosphatidylcholine and small amounts of phosphatidylethanolamine from the lumen to the cytosolic leaflet of the trans-Golgi network and ensures the maintenance of asymmetric distribution of phospholipids. May be involved in transport from early endosomes to the trans-Golgi network (TGN). This is Probable phospholipid-transporting ATPase DNF3 (DNF3) from Saccharomyces cerevisiae (strain ATCC 204508 / S288c) (Baker's yeast).